Reading from the N-terminus, the 138-residue chain is Cell division protein SepF (138 aa).

Positions 1–59 are disordered; the sequence is MNNKFKDFFGFGDNDSYEERDAYEEHYDEQEEMQNSNRPTNSRDSNVVSIKAGQAGSGP. The span at 33–48 shows a compositional bias: polar residues; that stretch reads MQNSNRPTNSRDSNVV.

This sequence belongs to the SepF family. In terms of assembly, homodimer. Interacts with FtsZ.

It is found in the cytoplasm. Its function is as follows. Cell division protein that is part of the divisome complex and is recruited early to the Z-ring. Probably stimulates Z-ring formation, perhaps through the cross-linking of FtsZ protofilaments. Its function overlaps with FtsA. The protein is Cell division protein SepF of Lactobacillus delbrueckii subsp. bulgaricus (strain ATCC 11842 / DSM 20081 / BCRC 10696 / JCM 1002 / NBRC 13953 / NCIMB 11778 / NCTC 12712 / WDCM 00102 / Lb 14).